Consider the following 451-residue polypeptide: Protoheme IX farnesyltransferase, mitochondrial (451 aa).

Transmembrane regions (helical) follow at residues 149 to 169 (TILVMLSAICSYALSPYPATV), 240 to 260 (PTVAALGLSNIALYSWIYTSL), 265 to 285 (IINTWVGALVGAIPPLMGWAA), 289 to 309 (LTHPGSWCLAGLLYAWQFPHF), 339 to 359 (VALRYSLLMFPLCFGLSYFNI), and 414 to 434 (KAFFASVLHLPAVLILAILHK).

Belongs to the UbiA prenyltransferase family.

It is found in the mitochondrion membrane. Its function is as follows. Converts protoheme IX and farnesyl diphosphate to heme O. The protein is Protoheme IX farnesyltransferase, mitochondrial (COX10) of Candida glabrata (strain ATCC 2001 / BCRC 20586 / JCM 3761 / NBRC 0622 / NRRL Y-65 / CBS 138) (Yeast).